The sequence spans 35 residues: uncharacterized protein (35 aa).

A helical transmembrane segment spans residues 10–30 (LMITASFFAIFIIIVVSVLLL).

It is found in the membrane. This is an uncharacterized protein from Salmonella paratyphi A (strain ATCC 9150 / SARB42).